The sequence spans 455 residues: MLEYTAGLIRRNKKKFLISSGIIGVGYYVTKTINNKIQEFQNRIREENFAKEQIKRRFHQTQSDCYMTFLSLLPVLCEPIMDDLPVETITKQLQIRRLEKQIGNKDVKNSGSTVLSDDFSTSQEGAISEDTNKPPELKSKNQLWQELKIKAITRFLTLIYCESLLIVFLHLQLNILSRKSYLETAIRLASETQGIDLVDQESNGDFSGNTQDENLSEQAFLSFSWWLLNKGWLEIKNKIEPCVEQHFGGINPRQQLKINEFAELLNKCQNCIDLKVLNLTEEDIHLGVGVIEDQSQPVGRKSTNFITNALLPPKEFEFFLLQQTNDLDFLSRFNNNIVNTESLNMLLDELNNYLNNADINLIVNKLATLGITKVLDEIVLNLLQKNRPNPISDMNIRDIDLNDFPPYKLAALLANITKQSISLTNNSVENPILADLNNLPELNDLSASVYSNFDP.

The segment covering 113–125 (TVLSDDFSTSQEG) has biased composition (polar residues). The segment at 113-135 (TVLSDDFSTSQEGAISEDTNKPP) is disordered. Residues 155 to 171 (FLTLIYCESLLIVFLHL) form a helical membrane-spanning segment.

It belongs to the peroxin-3 family. As to quaternary structure, component of the peroxisomal docking complex, composed of at least PEX3, PEX13, PEX14 and PEX17. Component of the peroxisomal translocation complex, composed of at least PEX3, PEX2, PEX10 and PEX12. Interacts with PEX19. Interacts with the pexophagy receptor ATG30.

It localises to the peroxisome membrane. Functionally, peroxisomal membrane protein required for peroxisome biosynthesis. Shared component of both the peroxisomal docking complex and the peroxisomal translocation complex. The two types of peroxisomal matrix targeting signals, PTS1 and PTS2, are first recognized in the cytosol by their receptors PEX5 and PEX7, respectively, which then carry the cargo to the peroxisomal membrane. The peroxisomal targeting signal (PTS) receptor-cargo complexes interact with peroxisomal membrane protein (PMP) components of the docking complex. They have then additional downstream interactions with the translocation complex, leading to the transport of fully folded and oligomerized cargo into the peroxisome matrix. PEX3 acts as an anchoring site for PEX19 on the peroxisomal membrane and thus plays a crucial role in the assembly of the peroxisomal translocation complex. Is also essential for the interaction between the two complexes. Finally. PEX3 activates selective autophagy of peroxisomes (pexophagy) via interaction with the pexophagy receptor ATG30. The protein is Peroxisomal membrane protein PEX3 of Komagataella pastoris (Yeast).